The chain runs to 187 residues: GTP cyclohydrolase 1 (187 aa).

The Zn(2+) site is built by Cys76, His79, and Cys148.

Belongs to the GTP cyclohydrolase I family. As to quaternary structure, toroid-shaped homodecamer, composed of two pentamers of five dimers.

It catalyses the reaction GTP + H2O = 7,8-dihydroneopterin 3'-triphosphate + formate + H(+). It functions in the pathway cofactor biosynthesis; 7,8-dihydroneopterin triphosphate biosynthesis; 7,8-dihydroneopterin triphosphate from GTP: step 1/1. This Streptococcus agalactiae serotype V (strain ATCC BAA-611 / 2603 V/R) protein is GTP cyclohydrolase 1.